The following is a 442-amino-acid chain: Transposase InsG for insertion sequence element IS4 (442 aa).

Belongs to the transposase 11 family.

Its function is as follows. Involved in the transposition of the insertion sequence IS4. This is Transposase InsG for insertion sequence element IS4 (insG) from Escherichia coli (strain K12).